A 385-amino-acid polypeptide reads, in one-letter code: Succinate--CoA ligase [ADP-forming] subunit beta (385 aa).

The ATP-grasp domain occupies 9–244 (KEVLRKYGVS…LDEEDPKEIE (236 aa)). ATP-binding positions include Lys-46, 53-55 (GRG), Glu-99, Cys-102, and Glu-107. Mg(2+) is bound by residues Asn-199 and Asp-213. Substrate-binding positions include Asn-264 and 321-323 (GIM).

The protein belongs to the succinate/malate CoA ligase beta subunit family. As to quaternary structure, heterotetramer of two alpha and two beta subunits. Mg(2+) is required as a cofactor.

It catalyses the reaction succinate + ATP + CoA = succinyl-CoA + ADP + phosphate. It carries out the reaction GTP + succinate + CoA = succinyl-CoA + GDP + phosphate. It participates in carbohydrate metabolism; tricarboxylic acid cycle; succinate from succinyl-CoA (ligase route): step 1/1. In terms of biological role, succinyl-CoA synthetase functions in the citric acid cycle (TCA), coupling the hydrolysis of succinyl-CoA to the synthesis of either ATP or GTP and thus represents the only step of substrate-level phosphorylation in the TCA. The beta subunit provides nucleotide specificity of the enzyme and binds the substrate succinate, while the binding sites for coenzyme A and phosphate are found in the alpha subunit. The chain is Succinate--CoA ligase [ADP-forming] subunit beta from Bacillus velezensis (strain DSM 23117 / BGSC 10A6 / LMG 26770 / FZB42) (Bacillus amyloliquefaciens subsp. plantarum).